The following is a 543-amino-acid chain: Zinc finger CCCH-type with G patch domain-containing protein (543 aa).

2 disordered regions span residues 55–79 and 95–132; these read AATS…DNPI and TEDS…DKLD. Positions 65-76 are enriched in low complexity; it reads DTAGRAPPATAD. Over residues 118 to 131 the composition is skewed to acidic residues; sequence DDDADNDDDADDKL. Residues 186-209 form a C3H1-type zinc finger; it reads PCAYFLEGECRFTDEKCRYSHGEV. Residues 272-304 are disordered; it reads PFEDLLPLDEDEDGQEAAEDSESDTDGADEEEA. Residues 277–304 are compositionally biased toward acidic residues; that stretch reads LPLDEDEDGQEAAEDSESDTDGADEEEA. In terms of domain architecture, G-patch spans 335-381; sequence TRGIGSKIMQKMGYIVGTGLGREGEGIVVPVSAQVLPQGRSLDYCME. Residues 438–460 form a disordered region; sequence GAAGGESSRPNRNRPGALSRQEL.

The protein resides in the nucleus. Its function is as follows. Transcription repressor. In Anopheles gambiae (African malaria mosquito), this protein is Zinc finger CCCH-type with G patch domain-containing protein.